The chain runs to 39 residues: Natriuretic peptide NsNP-b (39 aa).

A propeptide spanning residues 1–8 is cleaved from the precursor; sequence SGSKTAKI. Cys-12 and Cys-28 form a disulfide bridge. The disordered stretch occupies residues 19–39; the sequence is RIGSTSGMGCGSVPKPTPGGS.

The protein belongs to the natriuretic peptide family. Expressed by the venom gland.

It localises to the secreted. Functionally, snake venom natriuretic peptide that targets both NPR1 and NPR2. Exhibits hypotensive and vasodepressor activities. This is Natriuretic peptide NsNP-b from Notechis scutatus scutatus (Mainland tiger snake).